A 265-amino-acid chain; its full sequence is Mlc titration factor A (265 aa).

4 residues coordinate Zn(2+): histidine 111, histidine 148, histidine 152, and glutamate 211.

Belongs to the MtfA family. As to quaternary structure, interacts with Mlc. Zn(2+) serves as cofactor.

The protein resides in the cytoplasm. Its function is as follows. Involved in the modulation of the activity of the glucose-phosphotransferase system (glucose-PTS). Interacts with the transcriptional repressor Mlc, preventing its interaction with DNA and leading to the modulation of expression of genes regulated by Mlc, including ptsG, which encodes the PTS system glucose-specific EIICB component. In terms of biological role, shows zinc-dependent metallopeptidase activity. This is Mlc titration factor A from Escherichia coli O139:H28 (strain E24377A / ETEC).